Here is a 698-residue protein sequence, read N- to C-terminus: UV radiation resistance-associated protein (698 aa).

Residues 1-10 (MSSCASLGGP) show a composition bias toward low complexity. The tract at residues 1–21 (MSSCASLGGPVPLPPPGPSAA) is disordered. In terms of domain architecture, C2 spans 23-149 (TSGAPARALH…YLGQQIHARN (127 aa)). The segment at 199–268 (HRAQCAIKQT…REVAFLHKQQ (70 aa)) is sufficient for interaction with STX7; VTI1B AND STX8. Positions 200 to 304 (RAQCAIKQTQ…LRKECTAKRE (105 aa)) form a coiled coil. A sufficient for interaction with VPS16, required for interaction with CEP63 region spans residues 269–441 (MALQDKGSAF…IAQLRYQHGL (173 aa)). The interval 442–698 (GTPDLRQTLP…FRRPRRSSDK (257 aa)) is required for interaction with PRKDC, XRCC6 and XRCC5. Disordered stretches follow at residues 477–551 (PKRQ…SSLD) and 565–586 (VDLG…EQGE). Phosphoserine is present on Ser-492. Position 497 is a phosphoserine; by MTOR (Ser-497). At Ser-507 the chain carries Phosphoserine. Position 517 is a phosphothreonine (Thr-517). A phosphoserine mark is found at Ser-521, Ser-548, Ser-549, Ser-570, and Ser-688.

As to quaternary structure, component of the PI3K (PI3KC3/PI3K-III/class III phosphatidylinositol 3-kinase) complex II (PI3KC3-C2) in which the core composed of the catalytic subunit PIK3C3, the regulatory subunit PIK3R4 and BECN1 is associated with UVRAG; in the complex interacts directly with BECN1. PI3KC3-C2 can associate with further regulatory subunits such as RUBCN and probably SH3GLB1/Bif-1. Interacts with SH3GLB1; UVRAG bridges the interaction to BECN1 indicative for an association with the PI3K complex PI3KC3-C2. Interacts with RINT1. Associates with the NRZ complex under basal conditions and dissociates from it under autophagy conditions to associate with the PI3K complex; these complex associations seem to be mutually exclusive. Interacts with VPS16; VPS11; VPS18; VPS33 (VPS33A or VPS33B) and VPS39; indicative for an association with a class C Vps tethering complex (possibly the HOPS complex). Interacts with RAB7A; RAB7A competes with UVRAG for RUBCN binding. Interacts with STX7, VTI1B, STX8. Interacts with PRKDC, XRCC6 and XRCC5; indicative for an association with the DNA-dependent protein kinase complex DNA-PK. Interacts with CEP63. Directly interacts with FEZ1 and SCOC; the interaction with SCOC is reduced by amino acid starvation, but the complex is stabilized in the presence of FEZ1. Interacts with BECN1P1/BECN2. Interacts with SLAMF1. Interacts with RUBCNL/PACER; promoting targeting of UVRAG to autophagosome. Interacts with WNK1. In terms of processing, phosphorylated at Ser-497 by MTOR under basal conditions; increases the interaction with RUBCN implicated in inhibitory effect of RUBCN on PI3KC3 and decreases interaction with RAB7A, and VPS16 and VPS39 (indicative for a class C Vps complex, possibly the HOPS complex).

It is found in the late endosome. It localises to the lysosome. Its subcellular location is the cytoplasmic vesicle. The protein resides in the autophagosome. The protein localises to the early endosome. It is found in the endoplasmic reticulum. It localises to the midbody. Its subcellular location is the chromosome. The protein resides in the centromere. Functionally, versatile protein that is involved in regulation of different cellular pathways implicated in membrane trafficking. Involved in regulation of the COPI-dependent retrograde transport from Golgi and the endoplasmic reticulum by associating with the NRZ complex; the function is dependent on its binding to phosphatidylinositol 3-phosphate (PtdIns(3)P). During autophagy acts as a regulatory subunit of the alternative PI3K complex II (PI3KC3-C2) that mediates formation of phosphatidylinositol 3-phosphate and is believed to be involved in maturation of autophagosomes and endocytosis. Activates lipid kinase activity of PIK3C3. Involved in the regulation of degradative endocytic trafficking and cytokinesis, and in regulation of ATG9A transport from the Golgi to the autophagosome; the functions seems to implicate its association with PI3KC3-C2. Involved in maturation of autophagosomes and degradative endocytic trafficking independently of BECN1 but depending on its association with a class C Vps complex (possibly the HOPS complex); the association is also proposed to promote autophagosome recruitment and activation of Rab7 and endosome-endosome fusion events. Enhances class C Vps complex (possibly HOPS complex) association with a SNARE complex and promotes fusogenic SNARE complex formation during late endocytic membrane fusion. In case of negative-strand RNA virus infection is required for efficient virus entry, promotes endocytic transport of virions and is implicated in a VAMP8-specific fusogenic SNARE complex assembly. Involved in maintaining chromosomal stability. Promotes DNA double-strand break (DSB) repair by association with DNA-dependent protein kinase complex DNA-PK and activating it in non-homologous end joining (NHEJ). Required for centrosome stability and proper chromosome segregation. The sequence is that of UV radiation resistance-associated protein (Uvrag) from Mus musculus (Mouse).